Consider the following 215-residue polypeptide: Cytochrome b6 (215 aa).

Residues 32–52 form a helical membrane-spanning segment; it reads IFYCLGGITLTCFLVQVATGF. Cys-35 lines the heme c pocket. His-86 and His-100 together coordinate heme b. Transmembrane regions (helical) follow at residues 90 to 110, 116 to 136, and 186 to 206; these read ASMMVLMMILHVFRVYLTGGF, LTWVTGVILAVLTVSFGVTGY, and LHTFVSPLLTAVFMLMHFLMI. Heme b contacts are provided by His-187 and His-202.

The protein belongs to the cytochrome b family. PetB subfamily. In terms of assembly, the 4 large subunits of the cytochrome b6-f complex are cytochrome b6, subunit IV (17 kDa polypeptide, PetD), cytochrome f and the Rieske protein, while the 4 small subunits are PetG, PetL, PetM and PetN. The complex functions as a dimer. It depends on heme b as a cofactor. Heme c is required as a cofactor.

It localises to the plastid. It is found in the chloroplast thylakoid membrane. In terms of biological role, component of the cytochrome b6-f complex, which mediates electron transfer between photosystem II (PSII) and photosystem I (PSI), cyclic electron flow around PSI, and state transitions. This chain is Cytochrome b6, found in Huperzia lucidula (Shining clubmoss).